The chain runs to 508 residues: Acetyl-coenzyme A carboxylase carboxyl transferase subunit beta, chloroplastic (508 aa).

Disordered regions lie at residues 30-51 and 173-234; these read PIEN…NIQG and NSSN…SSTH. The span at 35-47 shows a compositional bias: basic and acidic residues; that stretch reads SESKDPNRNDTDK. Positions 173–219 are enriched in low complexity; it reads NSSNNNSSNENSSNENSSNENSSNENSSNDYISSSISSQSENSSQNE. A compositionally biased stretch (polar residues) spans 220 to 234; it reads DITTSDQTIPESSTH. The 265-residue stretch at 244–508 folds into the CoA carboxyltransferase N-terminal domain; that stretch reads LWVQCENCYG…LHTFFPLNQN (265 aa). Zn(2+) contacts are provided by cysteine 248, cysteine 251, cysteine 267, and cysteine 270. The C4-type zinc-finger motif lies at 248 to 270; sequence CENCYGLNYKKFFKSKMHLCEQC.

It belongs to the AccD/PCCB family. In terms of assembly, acetyl-CoA carboxylase is a heterohexamer composed of biotin carboxyl carrier protein, biotin carboxylase and 2 subunits each of ACCase subunit alpha and ACCase plastid-coded subunit beta (accD). Requires Zn(2+) as cofactor.

It localises to the plastid. Its subcellular location is the chloroplast stroma. The catalysed reaction is N(6)-carboxybiotinyl-L-lysyl-[protein] + acetyl-CoA = N(6)-biotinyl-L-lysyl-[protein] + malonyl-CoA. The protein operates within lipid metabolism; malonyl-CoA biosynthesis; malonyl-CoA from acetyl-CoA: step 1/1. Component of the acetyl coenzyme A carboxylase (ACC) complex. Biotin carboxylase (BC) catalyzes the carboxylation of biotin on its carrier protein (BCCP) and then the CO(2) group is transferred by the transcarboxylase to acetyl-CoA to form malonyl-CoA. This is Acetyl-coenzyme A carboxylase carboxyl transferase subunit beta, chloroplastic from Lactuca sativa (Garden lettuce).